We begin with the raw amino-acid sequence, 482 residues long: Glutamyl-tRNA(Gln) amidotransferase subunit A (482 aa).

Active-site charge relay system residues include lysine 74 and serine 149. Serine 173 (acyl-ester intermediate) is an active-site residue.

The protein belongs to the amidase family. GatA subfamily. Heterotrimer of A, B and C subunits.

It catalyses the reaction L-glutamyl-tRNA(Gln) + L-glutamine + ATP + H2O = L-glutaminyl-tRNA(Gln) + L-glutamate + ADP + phosphate + H(+). Its function is as follows. Allows the formation of correctly charged Gln-tRNA(Gln) through the transamidation of misacylated Glu-tRNA(Gln) in organisms which lack glutaminyl-tRNA synthetase. The reaction takes place in the presence of glutamine and ATP through an activated gamma-phospho-Glu-tRNA(Gln). The sequence is that of Glutamyl-tRNA(Gln) amidotransferase subunit A from Prochlorococcus marinus (strain MIT 9215).